The sequence spans 225 residues: Membrin-11 (225 aa).

Ala-2 carries the N-acetylalanine modification. The Cytoplasmic portion of the chain corresponds to 2 to 200; the sequence is ASGIVEGGGS…VLRLIERRNR (199 aa). Residues 201-221 traverse the membrane as a helical; Anchor for type IV membrane protein segment; that stretch reads VDTWIKYAGMIATLVILYLFI. The Vesicular segment spans residues 222-225; it reads RWTR.

Belongs to the GOSR2 family.

It is found in the golgi apparatus membrane. Involved in transport of proteins from the cis/medial-Golgi to the trans-Golgi network. In Arabidopsis thaliana (Mouse-ear cress), this protein is Membrin-11 (MEMB11).